Consider the following 235-residue polypeptide: Riboflavin kinase (235 aa).

Residues Thr-45 and Asn-47 each contribute to the Mg(2+) site. The active-site Nucleophile is the Glu-140.

This sequence belongs to the flavokinase family. The cofactor is Zn(2+). Requires Mg(2+) as cofactor.

The catalysed reaction is riboflavin + ATP = FMN + ADP + H(+). The protein operates within cofactor biosynthesis; FMN biosynthesis; FMN from riboflavin (ATP route): step 1/1. Catalyzes the phosphorylation of riboflavin (vitamin B2) to form flavin mononucleotide (FMN) coenzyme. The protein is Riboflavin kinase (FMN1) of Chaetomium globosum (strain ATCC 6205 / CBS 148.51 / DSM 1962 / NBRC 6347 / NRRL 1970) (Soil fungus).